A 155-amino-acid polypeptide reads, in one-letter code: Telokin-like protein 20 homolog (155 aa).

The segment at 109 to 155 (KRAVAPPHHEPEPVPAEEGAVADRAEPESGDAPPSPKKQKLDEREQD) is disordered.

The chain is Telokin-like protein 20 homolog from Orgyia pseudotsugata multicapsid polyhedrosis virus (OpMNPV).